The chain runs to 338 residues: HLA class I histocompatibility antigen, alpha chain G (338 aa).

The N-terminal stretch at 1 to 24 (MVVMAPRTLFLLLSGALTLTETWA) is a signal peptide. The VL9 epitope stretch occupies residues 3 to 11 (VMAPRTLFL). Residues 25-114 (GSHSMRYFSA…LRGYYNQSEA (90 aa)) are alpha-1. Topologically, residues 25–308 (GSHSMRYFSA…KQSSLPTIPI (284 aa)) are extracellular. A peptide antigen-binding residues include Tyr31, His94, Asn101, and Tyr108. N-linked (GlcNAc...) asparagine glycosylation occurs at Asn110. The tract at residues 115–206 (SSHTLQWMIG…ENGKEMLQRA (92 aa)) is alpha-2. An intrachain disulfide couples Cys125 to Cys188. The a peptide antigen site is built by Ser167, Lys170, Gln179, Arg180, Tyr183, and Tyr195. Positions 207–298 (DPPKTHVTHH…GLPEPLMLRW (92 aa)) are alpha-3. The region spanning 209–299 (PKTHVTHHPV…LPEPLMLRWK (91 aa)) is the Ig-like C1-type domain. Cys227 and Cys283 are joined by a disulfide. The interval 299 to 308 (KQSSLPTIPI) is connecting peptide. A helical transmembrane segment spans residues 309–332 (MGIVAGLVVLAAVVTGAAVAAVLW). The Cytoplasmic portion of the chain corresponds to 333 to 338 (RKKSSD). The ER-retrieval signal motif lies at 334-336 (KKS).

This sequence belongs to the MHC class I family. Forms a heterotrimer with B2M and a self-peptide (peptide-bound HLA-G-B2M). HLA-G-B2M complex interacts with components of the antigen processing machinery TAPBP and TAP1-TAP2 complex; this interaction is required for loading of high affinity peptides and heterotrimer translocation to the cell surface. Interacts with CALCR; this interaction is required for appropriate folding. Interacts with COPB1; this interaction mediates the endoplasmic reticulum (ER) retrieval of HLA-G-B2M complexes that bind low affinity peptides. On the cell surface, peptide-bound HLA-G-B2M molecules (referred to as monomers) can form disulfide-linked homomultimers, homodimers and homotrimers. Interacts with KIR2DL4; this interaction is direct. Interacts with LILRB1 and LILRB2 receptors; this interaction is direct. Interacts with CD160; this interactions is direct. Interacts with CD8A homodimer; this interaction is direct and might down-regulate T cell receptor signaling. Isoform 2: Forms a non-disulfide-linked homodimer and interacts with LILRB2. N-glycosylated. In terms of processing, produced by proteolytic cleavage at the cell surface (shedding) by matrix metalloproteinase MMP2. As to expression, expressed in adult eye. Expressed in immune cell subsets including monocytes, myeloid and plasmacytoid dendritic cells and regulatory T cells (Tr1)(at protein level). Secreted by follicular dendritic cell and follicular helper T cells. In terms of tissue distribution, detected in physiological fluids including amniotic fluid and serum. Expressed in placenta, amniotic membrane, skin, cord blood and peripheral blood mononuclear cells.

Its subcellular location is the cell membrane. It is found in the endoplasmic reticulum membrane. The protein localises to the early endosome membrane. It localises to the secreted. The protein resides in the early endosome. Its subcellular location is the cell projection. It is found in the filopodium membrane. In terms of biological role, non-classical major histocompatibility class Ib molecule involved in immune regulatory processes at the maternal-fetal interface. In complex with B2M/beta-2 microglobulin binds a limited repertoire of nonamer self-peptides derived from intracellular proteins including histones and ribosomal proteins. Peptide-bound HLA-G-B2M complex acts as a ligand for inhibitory/activating KIR2DL4, LILRB1 and LILRB2 receptors on uterine immune cells to promote fetal development while maintaining maternal-fetal tolerance. Upon interaction with KIR2DL4 and LILRB1 receptors on decidual NK cells, it triggers NK cell senescence-associated secretory phenotype as a molecular switch to promote vascular remodeling and fetal growth in early pregnancy. Through interaction with KIR2DL4 receptor on decidual macrophages induces pro-inflammatory cytokine production mainly associated with tissue remodeling. Through interaction with LILRB2 receptor triggers differentiation of type 1 regulatory T cells and myeloid-derived suppressor cells, both of which actively maintain maternal-fetal tolerance. May play a role in balancing tolerance and antiviral-immunity at maternal-fetal interface by keeping in check the effector functions of NK, CD8+ T cells and B cells. Reprograms B cells toward an immune suppressive phenotype via LILRB1. May induce immune activation/suppression via intercellular membrane transfer (trogocytosis), likely enabling interaction with KIR2DL4, which resides mostly in endosomes. Through interaction with the inhibitory receptor CD160 on endothelial cells may control angiogenesis in immune privileged sites. Likely does not bind B2M and presents peptides. Negatively regulates NK cell- and CD8+ T cell-mediated cytotoxicity. Its function is as follows. Non-classical major histocompatibility class Ib molecule involved in immune regulatory processes at the maternal-fetal interface. In complex with B2M/beta-2 microglobulin binds a limited repertoire of nonamer self-peptides derived from intracellular proteins including histones and ribosomal proteins. Peptide-bound HLA-G-B2M complex acts as a ligand for inhibitory/activating KIR2DL4, LILRB1 and LILRB2 receptors on uterine immune cells to promote fetal development while maintaining maternal-fetal tolerance. Upon interaction with KIR2DL4 and LILRB1 receptors on decidual NK cells, it triggers NK cell senescence-associated secretory phenotype as a molecular switch to promote vascular remodeling and fetal growth in early pregnancy. Through interaction with KIR2DL4 receptor on decidual macrophages induces pro-inflammatory cytokine production mainly associated with tissue remodeling. Through interaction with LILRB2 receptor triggers differentiation of type 1 regulatory T cells and myeloid-derived suppressor cells, both of which actively maintain maternal-fetal tolerance. Reprograms B cells toward an immune suppressive phenotype via LILRB1. Functionally, likely does not bind B2M and presents peptides. This is HLA class I histocompatibility antigen, alpha chain G from Homo sapiens (Human).